A 331-amino-acid chain; its full sequence is uncharacterized protein (331 aa).

The protein belongs to the proline racemase family.

This is an uncharacterized protein from Bacillus anthracis.